A 227-amino-acid polypeptide reads, in one-letter code: Endonuclease V (227 aa).

Mg(2+) contacts are provided by aspartate 46 and aspartate 114.

Belongs to the endonuclease V family. It depends on Mg(2+) as a cofactor.

Its subcellular location is the cytoplasm. It catalyses the reaction Endonucleolytic cleavage at apurinic or apyrimidinic sites to products with a 5'-phosphate.. In terms of biological role, DNA repair enzyme involved in the repair of deaminated bases. Selectively cleaves double-stranded DNA at the second phosphodiester bond 3' to a deoxyinosine leaving behind the intact lesion on the nicked DNA. In Alkalilimnicola ehrlichii (strain ATCC BAA-1101 / DSM 17681 / MLHE-1), this protein is Endonuclease V.